A 364-amino-acid chain; its full sequence is Probable dual-specificity RNA methyltransferase RlmN (364 aa).

Glu-109 functions as the Proton acceptor in the catalytic mechanism. The region spanning Pro-123–Glu-351 is the Radical SAM core domain. Cys-130 and Cys-356 form a disulfide bridge. [4Fe-4S] cluster contacts are provided by Cys-137, Cys-141, and Cys-144. Residues Gly-184–Glu-185, Ser-214, Ser-237–His-239, and Asn-313 each bind S-adenosyl-L-methionine. Cys-356 functions as the S-methylcysteine intermediate in the catalytic mechanism.

It belongs to the radical SAM superfamily. RlmN family. [4Fe-4S] cluster is required as a cofactor.

Its subcellular location is the cytoplasm. It catalyses the reaction adenosine(2503) in 23S rRNA + 2 reduced [2Fe-2S]-[ferredoxin] + 2 S-adenosyl-L-methionine = 2-methyladenosine(2503) in 23S rRNA + 5'-deoxyadenosine + L-methionine + 2 oxidized [2Fe-2S]-[ferredoxin] + S-adenosyl-L-homocysteine. It carries out the reaction adenosine(37) in tRNA + 2 reduced [2Fe-2S]-[ferredoxin] + 2 S-adenosyl-L-methionine = 2-methyladenosine(37) in tRNA + 5'-deoxyadenosine + L-methionine + 2 oxidized [2Fe-2S]-[ferredoxin] + S-adenosyl-L-homocysteine. In terms of biological role, specifically methylates position 2 of adenine 2503 in 23S rRNA and position 2 of adenine 37 in tRNAs. In Nostoc punctiforme (strain ATCC 29133 / PCC 73102), this protein is Probable dual-specificity RNA methyltransferase RlmN.